The primary structure comprises 393 residues: MNFQVEPPEKKKTKNSSPPHSPPSSSSPSLSLLPEEIVVHCLARISRLYYPTLSLVSKSFRSILSSTELYATRSHLGSTEQCVYLCLWDPSYQFPQWLRLLVNPNRTLANSIIKKRRKKKKTTGQMLVPLTSSKFTSVSKATVVVGSEIYVLGGPVDSAVRVLDCCSHTWRDAPSMNVSRMNAWACFHDGKIYVMGGCQGLKDEPWAEVFNTKTQTWEGLPEPGSEVRKCSIDRSGVIEGKIEFGNVNEMCAYDTKLCKWEYCVNKSAALRSECMIENVSYGFWNMRLLWYDNDIQKDYWKRLEGLESLDDKYMRNGGSSGNTTKLVACGGKLLLLWEGYMKHNPNNRKKIWCAVIAIEKCDGGGVWGIVESVDVLYTVPISCQLLHCLVVSV.

Positions 1-30 (MNFQVEPPEKKKTKNSSPPHSPPSSSSPSL) are disordered. In terms of domain architecture, F-box spans 27-73 (SPSLSLLPEEIVVHCLARISRLYYPTLSLVSKSFRSILSSTELYATR). Kelch repeat units follow at residues 148-190 (EIYV…FHDG), 191-237 (KIYV…RSGV), 239-272 (EGKIEFGNVNEMCAYDTKLCKWEYCVNKSAALRS), and 273-320 (ECMI…GGSS).

This is F-box/kelch-repeat protein At4g19865 from Arabidopsis thaliana (Mouse-ear cress).